The primary structure comprises 142 residues: Conidial pigment biosynthesis dehydratase EthD (142 aa).

One can recognise an EthD domain in the interval 25 to 121 (PGMSEAAYRE…PDHQKFADTS (97 aa)).

This sequence belongs to the tpcK family.

Its pathway is pigment biosynthesis. Dehydratase; part of the Pks1 gene cluster that mediates the biosynthesis of an anthraquinone derivative pigment that contributes to conidial pigmentation that provides protection from UV radiation, heat and cold stress. The polyketide synthase Pks1 produces 1-acetyl-2,4,6,8-tetrahydroxy-9,10-anthraquinone though condensation of acetyl-CoA with malonyl-CoA. The dehydratase EthD and the laccase Mlac1 further convert the anthraquinone derivative into the final conidial pigment. In Metarhizium robertsii (strain ARSEF 23 / ATCC MYA-3075) (Metarhizium anisopliae (strain ARSEF 23)), this protein is Conidial pigment biosynthesis dehydratase EthD.